The chain runs to 74 residues: UPF0435 protein GK0418 (74 aa).

The protein belongs to the UPF0435 family.

The chain is UPF0435 protein GK0418 from Geobacillus kaustophilus (strain HTA426).